The sequence spans 1255 residues: Mucin-1 (1255 aa).

The first 23 residues, 1–23, serve as a signal peptide directing secretion; the sequence is MTPGTQSPFFLLLLLTVLTVVTG. A disordered region spans residues 23–1033; it reads GSGHASSTPG…PLTSSNHSTS (1011 aa). Residues 24–1158 lie on the Extracellular side of the membrane; sequence SGHASSTPGG…SAQSGAGVPG (1135 aa). The segment covering 38 to 54 has biased composition (polar residues); it reads SATQRSSVPSSTEKNAV. Over residues 55–75 the composition is skewed to low complexity; that stretch reads SMTSSVLSSHSPGSGSSTTQG. Residues 61 to 80 form a 1; approximate repeat; it reads LSSHSPGSGSSTTQGQDVTL. Residues 81–100 form a 2; approximate repeat; that stretch reads APATEPASGSAATWGQDVTS. Over residues 90 to 102 the composition is skewed to polar residues; it reads SAATWGQDVTSVP. 43 tandem repeats follow at residues 101–120, 121–140, 141–160, 161–180, 181–200, 201–220, 221–240, 241–260, 261–280, 281–300, 301–320, 321–340, 341–360, 361–380, 381–400, 401–420, 421–440, 441–460, 461–480, 481–500, 501–520, 521–540, 541–560, 561–580, 581–600, 601–620, 621–640, 641–660, 661–680, 681–700, 701–720, 721–740, 741–760, 761–780, 781–800, 801–820, 821–840, 841–860, 861–880, 881–900, 901–920, 921–940, and 941–960. Residues 126–965 form a 42 X 20 AA approximate tandem repeats of P-A-P-G-S-T-A-P-P-A-H-G-V-T-S-A-P-D-T-R region; it reads PAPGSTAPPA…HNVTSASGSA (840 aa). 2 O-linked (GalNAc...) threonine glycosylation sites follow: threonine 131 and threonine 139. Residue serine 140 is glycosylated (O-linked (GalNAc...) serine). O-linked (GalNAc...) threonine glycosylation occurs at threonine 144. Asparagine 957 carries an N-linked (GlcNAc...) asparagine glycan. A compositionally biased stretch (low complexity) spans 960 to 970; that stretch reads SASGSASGSAS. One copy of the 46; approximate repeat lies at 961–980; it reads ASGSASGSASTLVHNGTSAR. Polar residues-rich tracts occupy residues 971 to 993 and 1001 to 1033; these read TLVHNGTSARATTTPASKSTPFS and TPTTLASHSTKTDASSTHHSSVPPLTSSNHSTS. Asparagine 975 carries N-linked (GlcNAc...) asparagine glycosylation. Residues 981–1000 form a 47; approximate repeat; it reads ATTTPASKSTPFSIPSHHSD. Residues 1001–1020 form a 48; approximate repeat; the sequence is TPTTLASHSTKTDASSTHHS. Residues asparagine 1029, asparagine 1055, and asparagine 1133 are each glycosylated (N-linked (GlcNAc...) asparagine). One can recognise an SEA domain in the interval 1039–1148; that stretch reads GVSFFFLSFH…VSVSDVPFPF (110 aa). A helical membrane pass occupies residues 1159–1181; the sequence is WGIALLVLVCVLVALAIVYLIAL. The Cytoplasmic segment spans residues 1182–1255; it reads AVCQCRRKNY…PAVAATSANL (74 aa). Residues cysteine 1184 and cysteine 1186 are each lipidated (S-palmitoyl cysteine). The interaction with P53 stretch occupies residues 1192 to 1228; it reads GQLDIFPARDTYHPMSEYPTYHTHGRYVPPSSTDRSP. Position 1203 is a phosphotyrosine; by PDGFR (tyrosine 1203). The Interaction with GRB2 signature appears at 1203 to 1206; sequence YHPM. Tyrosine 1212 is modified (phosphotyrosine). The interval 1214–1237 is disordered; the sequence is THGRYVPPSSTDRSPYEKVSAGNG. Phosphotyrosine; by PDGFR is present on tyrosine 1218. Residues 1223-1230 form a required for interaction with GSK3B region; that stretch reads STDRSPYE. Position 1224 is a phosphothreonine; by PKC/PRKCD (threonine 1224). Position 1227 is a phosphoserine; by GSK3-beta (serine 1227). Residue tyrosine 1229 is modified to Phosphotyrosine; by CSK, EGFR and SRC. The short motif at 1229-1232 is the Interaction with SRC and ESR1 element; that stretch reads YEKV. The segment at 1233–1241 is required for interaction with beta- and gamma-catenins; the sequence is SAGNGGSSL. The residue at position 1243 (tyrosine 1243) is a Phosphotyrosine. The short motif at 1243 to 1246 is the Required for interaction with AP1S2 element; sequence YTNP.

The alpha subunit forms a tight, non-covalent heterodimeric complex with the proteolytically-released beta-subunit. Interaction, via the tandem repeat region, with domain 1 of ICAM1 is implicated in cell migration and metastases. Isoform 1 binds directly the SH2 domain of GRB2, and forms a MUC1/GRB2/SOS1 complex involved in RAS signaling. The cytoplasmic tail (MUC1CT) interacts with several proteins such as SRC, CTNNB1 and ERBs. Interaction with the SH2 domain of CSK decreases interaction with GSK3B. Interacts with CTNNB1/beta-catenin and JUP/gamma-catenin and promotes cell adhesion. Interaction with JUP/gamma-catenin is induced by heregulin. Binds PRKCD, ERBB2, ERBB3 and ERBB4. Heregulin (HRG) stimulates the interaction with ERBB2 and, to a much lesser extent, the interaction with ERBB3 and ERBB4. Interacts with P53 in response to DNA damage. Interacts with KLF4. Interacts with estrogen receptor alpha/ESR1, through its DNA-binding domain, and stimulates its transcription activity. Binds ADAM17. Isoform ZD forms disulfide-linked oligomers. Highly glycosylated (N- and O-linked carbohydrates and sialic acid). O-glycosylated to a varying degree on serine and threonine residues within each tandem repeat, ranging from mono- to penta-glycosylation. The average density ranges from about 50% in human milk to over 90% in T47D breast cancer cells. Further sialylation occurs during recycling. Membrane-shed glycoproteins from kidney and breast cancer cells have preferentially sialyated core 1 structures, while secreted forms from the same tissues display mainly core 2 structures. The O-glycosylated content is overlapping in both these tissues with terminal fucose and galactose, 2- and 3-linked galactose, 3- and 3,6-linked GalNAc-ol and 4-linked GlcNAc predominating. Differentially O-glycosylated in breast carcinomas with 3,4-linked GlcNAc. N-glycosylation consists of high-mannose, acidic complex-type and hybrid glycans in the secreted form MUC1/SEC, and neutral complex-type in the transmembrane form, MUC1/TM. Post-translationally, proteolytic cleavage in the SEA domain occurs in the endoplasmic reticulum by an autoproteolytic mechanism and requires the full-length SEA domain as well as requiring a Ser, Thr or Cys residue at the P + 1 site. Cleavage at this site also occurs on isoform MUC1/X but not on isoform MUC1/Y. Ectodomain shedding is mediated by ADAM17. In terms of processing, dual palmitoylation on cysteine residues in the CQC motif is required for recycling from endosomes back to the plasma membrane. Phosphorylated on tyrosines and serine residues in the C-terminal. Phosphorylation on tyrosines in the C-terminal increases the nuclear location of MUC1 and beta-catenin. Phosphorylation by PKC delta induces binding of MUC1 to beta-catenin/CTNNB1 and thus decreases the formation of the beta-catenin/E-cadherin complex. Src-mediated phosphorylation inhibits interaction with GSK3B. Src- and EGFR-mediated phosphorylation on Tyr-1229 increases binding to beta-catenin/CTNNB1. GSK3B-mediated phosphorylation on Ser-1227 decreases this interaction but restores the formation of the beta-cadherin/E-cadherin complex. On T-cell receptor activation, phosphorylated by LCK. PDGFR-mediated phosphorylation increases nuclear colocalization of MUC1CT and CTNNB1. Post-translationally, the N-terminal sequence has been shown to begin at position 24 or 28. In terms of tissue distribution, expressed on the apical surface of epithelial cells, especially of airway passages, breast and uterus. Also expressed in activated and unactivated T-cells. Overexpressed in epithelial tumors, such as breast or ovarian cancer and also in non-epithelial tumor cells. Isoform Y is expressed in tumor cells only.

The protein localises to the apical cell membrane. Its subcellular location is the secreted. It localises to the cell membrane. The protein resides in the cytoplasm. It is found in the nucleus. Functionally, the alpha subunit has cell adhesive properties. Can act both as an adhesion and an anti-adhesion protein. May provide a protective layer on epithelial cells against bacterial and enzyme attack. The beta subunit contains a C-terminal domain which is involved in cell signaling, through phosphorylations and protein-protein interactions. Modulates signaling in ERK, SRC and NF-kappa-B pathways. In activated T-cells, influences directly or indirectly the Ras/MAPK pathway. Promotes tumor progression. Regulates TP53-mediated transcription and determines cell fate in the genotoxic stress response. Binds, together with KLF4, the PE21 promoter element of TP53 and represses TP53 activity. This is Mucin-1 (MUC1) from Homo sapiens (Human).